The chain runs to 431 residues: Nuclear bridge Ish domain protein les1 (431 aa).

A signal peptide spans 1 to 21 (MQPRFLLHGALLALGIQLCLS).

Its subcellular location is the nucleus inner membrane. Its function is as follows. Inner nuclear envelope protein involved in nuclear fission, which is achieved via local disassembly of nuclear pores within the narrow bridge that links segregating daughter nuclei. Les1 restricts the process of local nuclear envelope breakdown to the bridge midzone to prevent the leakage of material from daughter nuclei during mitosis. This Schizosaccharomyces pombe (strain 972 / ATCC 24843) (Fission yeast) protein is Nuclear bridge Ish domain protein les1.